The chain runs to 151 residues: Endoribonuclease YbeY (151 aa).

The Zn(2+) site is built by H108, H112, and D118.

Belongs to the endoribonuclease YbeY family. The cofactor is Zn(2+).

It is found in the cytoplasm. Functionally, single strand-specific metallo-endoribonuclease involved in late-stage 70S ribosome quality control and in maturation of the 3' terminus of the 16S rRNA. The sequence is that of Endoribonuclease YbeY from Porphyromonas gingivalis (strain ATCC 33277 / DSM 20709 / CIP 103683 / JCM 12257 / NCTC 11834 / 2561).